The sequence spans 122 residues: MARIAGVNIPTAKRVVIALTYIHGIGTKFAHEIVEKVGIPTDRRVHQLTDAEVLQIRETIDRDYQVEGDLRRETSMNIKRLMDLGCYRGLRHRRGLPVRGQRTHTNARTRKGPAKAIAGKKK.

Residues 99 to 122 (RGQRTHTNARTRKGPAKAIAGKKK) form a disordered region.

Belongs to the universal ribosomal protein uS13 family. In terms of assembly, part of the 30S ribosomal subunit. Forms a loose heterodimer with protein S19. Forms two bridges to the 50S subunit in the 70S ribosome.

Functionally, located at the top of the head of the 30S subunit, it contacts several helices of the 16S rRNA. In the 70S ribosome it contacts the 23S rRNA (bridge B1a) and protein L5 of the 50S subunit (bridge B1b), connecting the 2 subunits; these bridges are implicated in subunit movement. Contacts the tRNAs in the A and P-sites. The polypeptide is Small ribosomal subunit protein uS13 (Sinorhizobium fredii (strain NBRC 101917 / NGR234)).